We begin with the raw amino-acid sequence, 592 residues long: RNA-binding protein 47 (592 aa).

A compositionally biased stretch (low complexity) spans M1–A24. The segment at M1–E26 is disordered. RRM domains follow at residues C73 to D151, C153 to P235, and K248 to P320. 2 positions are modified to asymmetric dimethylarginine; alternate: R397 and R408. R397 and R408 each carry omega-N-methylarginine; alternate.

The protein belongs to the RRM RBM47 family. Homodimer. Interacts with A1CF. Interacts with APOBEC1; form an mRNA editing complex. Interacts with RBPMS.

It localises to the nucleus. The protein localises to the cytoplasm. In terms of biological role, single-stranded RNA-binding protein that functions in a variety of RNA processes, including alternative splicing, RNA stabilization, and RNA editing. Functions as an enzyme-substrate adapter for the cytidine deaminase APOBEC1. With APOBEC1 forms an mRNA editing complex involved into cytidine to uridine editing of a variety of mRNA molecules. Through the binding of their 3'UTR, also stabilizes a variety of mRNAs and regulates the expression of genes such as the interferon alpha/beta receptor and interleukin-10. Also involved in the alternative splicing of several genes including TJP1. Binds the pre-mRNA (U)GCAUG consensus sequences in downstream intronic regions of alternative exons, regulating their exclusion and inclusion into mRNAs. Independently of its RNA-binding activity, could negatively regulate MAVS by promoting its lysosomal degradation. The polypeptide is RNA-binding protein 47 (Canis lupus familiaris (Dog)).